Here is a 534-residue protein sequence, read N- to C-terminus: Acyl-CoA-binding domain-containing protein 5 (534 aa).

Residues 41-130 (HETRFEAAVK…MKKIIETMPM (90 aa)) form the ACB domain. Residue 52-61 (IQSLPKNGSF) coordinates an acyl-CoA. A Phosphothreonine modification is found at proline 63. Residues 72–76 (YSFYK), lysine 98, and tyrosine 117 contribute to the an acyl-CoA site. Leucine 137 and glutamate 172 each carry phosphothreonine. The tract at residues 181–225 (TPNAKTVNGKAESSDSGAESEEEEAQEEVKGAEQSDNDKKMMKKS) is disordered. Residues 190 to 219 (KAESSDSGAESEEEEAQEEVKGAEQSDNDK) are a coiled coil. Phosphoserine is present on residues serine 193, serine 194, serine 196, serine 200, serine 215, serine 279, and serine 313. Basic and acidic residues predominate over residues 207-225 (EEVKGAEQSDNDKKMMKKS). Positions 376 to 385 (EVKHGGEDGR) are enriched in basic and acidic residues. The tract at residues 376 to 442 (EVKHGGEDGR…ERWGSDRGSR (67 aa)) is disordered. Residue threonine 400 is modified to Phosphothreonine. Serine 428 bears the Phosphoserine mark. The segment covering 431 to 441 (DGERWGSDRGS) has biased composition (basic and acidic residues). Positions 447–476 (EQIALVLMRLQEDMQNVLQRLQKLETLTAL) form a coiled coil. Lysine 469 carries the post-translational modification N6-acetyllysine. Residues 506-526 (GVLTFAIIWPFIAQWLVYLYY) traverse the membrane as a helical segment.

It belongs to the ATG37 family.

It localises to the peroxisome membrane. Functionally, acyl-CoA binding protein which acts as the peroxisome receptor for pexophagy but is dispensable for aggrephagy and nonselective autophagy. Binds medium- and long-chain acyl-CoA esters. This chain is Acyl-CoA-binding domain-containing protein 5 (ACBD5), found in Homo sapiens (Human).